A 381-amino-acid chain; its full sequence is Curved DNA-binding protein (381 aa).

At serine 8 the chain carries Phosphoserine. Threonine 362 bears the Phosphothreonine mark. The Nuclear localization signal signature appears at 368 to 375 (KNKKKSKK).

Belongs to the peptidase M24 family.

The protein resides in the nucleus. Functionally, a non-essential protein that preferentially binds curved DNA. Binds non-curved DNA with a much lower affinity. This chain is Curved DNA-binding protein (cdb4), found in Schizosaccharomyces pombe (strain 972 / ATCC 24843) (Fission yeast).